The chain runs to 94 residues: Protein S100-A1 (94 aa).

2 EF-hand domains span residues 13 to 48 (INVF…FLDA) and 50 to 85 (KDVD…LTVA). The Ca(2+) site is built by Lys28, Glu33, Asp63, Asn65, Asp67, Glu69, and Glu74. Residue Cys86 is modified to S-nitrosocysteine.

It belongs to the S-100 family. As to quaternary structure, dimer of either two alpha chains, or two beta chains, or one alpha and one beta chain. Also forms heterodimers with S100P. Interacts with AGER. Interacts with CAPZA1. Interacts with FKBP4. Interacts with RYR1 and RYR2. Interacts with CACYBP in a calcium-dependent manner. Interacts with PPP5C (via TPR repeats); the interaction is calcium-dependent and modulates PPP5C activity. Interacts with ATP2A2 and PLN in a Ca(2+)-dependent manner. Interacts with mitochondrial F1-ATPase subunits ATP5F1A and ATP5F1B; these interactions increase F1-ATPase activity. Post-translationally, glutathionylated; glutathionylation increases affinity to calcium about 10-fold. As to expression, highly prevalent in heart. Also found in lesser quantities in skeletal muscle and brain.

The protein localises to the cytoplasm. It is found in the sarcoplasmic reticulum. Its subcellular location is the mitochondrion. In terms of biological role, small calcium binding protein that plays important roles in several biological processes such as Ca(2+) homeostasis, chondrocyte biology and cardiomyocyte regulation. In response to an increase in intracellular Ca(2+) levels, binds calcium which triggers conformational changes. These changes allow interactions with specific target proteins and modulate their activity. Regulates a network in cardiomyocytes controlling sarcoplasmic reticulum Ca(2+) cycling and mitochondrial function through interaction with the ryanodine receptors RYR1 and RYR2, sarcoplasmic reticulum Ca(2+)-ATPase/ATP2A2 and mitochondrial F1-ATPase. Facilitates diastolic Ca(2+) dissociation and myofilament mechanics in order to improve relaxation during diastole. This Homo sapiens (Human) protein is Protein S100-A1 (S100A1).